The following is a 244-amino-acid chain: 5-oxoprolinase subunit A (244 aa).

This sequence belongs to the LamB/PxpA family. In terms of assembly, forms a complex composed of PxpA, PxpB and PxpC.

It carries out the reaction 5-oxo-L-proline + ATP + 2 H2O = L-glutamate + ADP + phosphate + H(+). Functionally, catalyzes the cleavage of 5-oxoproline to form L-glutamate coupled to the hydrolysis of ATP to ADP and inorganic phosphate. This is 5-oxoprolinase subunit A from Escherichia coli (strain SE11).